Here is a 233-residue protein sequence, read N- to C-terminus: ATP-dependent Clp protease proteolytic subunit 2 (233 aa).

S116 (nucleophile) is an active-site residue. Residue H141 is part of the active site. The interval 214–233 (EGLKSIQPNGEAADDSEDDA) is disordered.

This sequence belongs to the peptidase S14 family. Fourteen ClpP subunits assemble into 2 heptameric rings which stack back to back to give a disk-like structure with a central cavity, resembling the structure of eukaryotic proteasomes.

The protein localises to the cytoplasm. It catalyses the reaction Hydrolysis of proteins to small peptides in the presence of ATP and magnesium. alpha-casein is the usual test substrate. In the absence of ATP, only oligopeptides shorter than five residues are hydrolyzed (such as succinyl-Leu-Tyr-|-NHMec, and Leu-Tyr-Leu-|-Tyr-Trp, in which cleavage of the -Tyr-|-Leu- and -Tyr-|-Trp bonds also occurs).. Its function is as follows. Cleaves peptides in various proteins in a process that requires ATP hydrolysis. Has a chymotrypsin-like activity. Plays a major role in the degradation of misfolded proteins. The protein is ATP-dependent Clp protease proteolytic subunit 2 of Salinibacter ruber (strain DSM 13855 / M31).